Here is a 953-residue protein sequence, read N- to C-terminus: Ubiquitin carboxyl-terminal hydrolase CYLD (953 aa).

Residues 106–590 (CEERLSLFRN…LEIMIGKKKG (485 aa)) form an interaction with TRIP region. CAP-Gly domains lie at 153 to 198 (LAER…VFVA) and 253 to 286 (DVLP…VQLC). The segment at 318-350 (FMSRGVGDKGSSSHNKPKVTGSTSDPGSRNRSE) is disordered. Residues 327–346 (GSSSHNKPKVTGSTSDPGSR) are compositionally biased toward polar residues. Ser384 is subject to Phosphoserine. The interval 387–410 (EMSSDFGHSSPPPQPPSMNSLSSE) is disordered. The interaction with TRAF2 stretch occupies residues 391–466 (DFGHSSPPPQ…MPSSSGNAHG (76 aa)). A phosphoserine mark is found at Ser415 and Ser419. Residues 467–681 (LEVGSLAEVK…FTSEEKDPEE (215 aa)) form an interaction with IKBKG/NEMO region. The region spanning 489 to 532 (GQPPGLSDVLAGLELEDECAGCTDGTFRGTRYFTCALKKALFVK) is the CAP-Gly 3 domain. In terms of domain architecture, USP spans 589 to 947 (KGIQGHYNSC…DAYMCMYQSP (359 aa)). Cys598 serves as the catalytic Nucleophile. The segment at 778 to 830 (LEDTPRQCRICGGLAMYECRECYDDPDISAGKIKQFCKTCSTQVHLHPRRLNH) is B-box. Zn(2+) is bound by residues Cys785, Cys788, Cys796, Cys799, Cys814, Cys817, His822, and His830. His868 serves as the catalytic Proton acceptor.

Belongs to the peptidase C19 family. As to quaternary structure, interacts (via CAP-Gly domain) with IKBKG/NEMO (via proline-rich C-terminal region). Interacts with TRAF2 and TRIP. Interacts with PLK1, DVL1, DVL3, MAVS, TBK1, IKKE and RIGI. Interacts (via CAP-Gly domain) with microtubules. Interacts with HDAC6 and BCL3. Interacts with MAP3K7. Identified in a complex with TRAF6 and SQSTM1. Interacts with OPTN and SQSTM1. Interacts with CEP350. Interacts with RNF31; the interaction is indirect and is mediated via SPATA2. Interacts with SPATA2 (via the PUB domain); the interaction is direct and recruits CYLD to the LUBAC complex, thereby regulating TNF-alpha-induced necroptosis. Post-translationally, phosphorylated on several serine residues by IKKA and/or IKKB in response to immune stimuli. Phosphorylation requires IKBKG. Phosphorylation abolishes TRAF2 deubiquitination, interferes with the activation of Jun kinases, and strongly reduces CD40-dependent gene activation by NF-kappa-B. In terms of processing, ubiquitinated. Polyubiquitinated in hepatocytes treated with palmitic acid. Ubiquitination is mediated by E3 ligase TRIM47 and leads to proteasomal degradation.

The protein resides in the cytoplasm. It localises to the perinuclear region. Its subcellular location is the cytoskeleton. It is found in the cell membrane. The protein localises to the microtubule organizing center. The protein resides in the centrosome. It localises to the spindle. Its subcellular location is the cilium basal body. The enzyme catalyses Thiol-dependent hydrolysis of ester, thioester, amide, peptide and isopeptide bonds formed by the C-terminal Gly of ubiquitin (a 76-residue protein attached to proteins as an intracellular targeting signal).. Functionally, deubiquitinase that specifically cleaves 'Lys-63'- and linear 'Met-1'-linked polyubiquitin chains and is involved in NF-kappa-B activation and TNF-alpha-induced necroptosis. Negatively regulates NF-kappa-B activation by deubiquitinating upstream signaling factors. Contributes to the regulation of cell survival, proliferation and differentiation via its effects on NF-kappa-B activation. Negative regulator of Wnt signaling. Inhibits HDAC6 and thereby promotes acetylation of alpha-tubulin and stabilization of microtubules. Plays a role in the regulation of microtubule dynamics, and thereby contributes to the regulation of cell proliferation, cell polarization, cell migration, and angiogenesis. Required for normal cell cycle progress and normal cytokinesis. Inhibits nuclear translocation of NF-kappa-B. Plays a role in the regulation of inflammation and the innate immune response, via its effects on NF-kappa-B activation. Dispensable for the maturation of intrathymic natural killer cells, but required for the continued survival of immature natural killer cells. Negatively regulates TNFRSF11A signaling and osteoclastogenesis. Involved in the regulation of ciliogenesis, allowing ciliary basal bodies to migrate and dock to the plasma membrane; this process does not depend on NF-kappa-B activation. Ability to remove linear ('Met-1'-linked) polyubiquitin chains regulates innate immunity and TNF-alpha-induced necroptosis: recruited to the LUBAC complex via interaction with SPATA2 and restricts linear polyubiquitin formation on target proteins. Regulates innate immunity by restricting linear polyubiquitin formation on RIPK2 in response to NOD2 stimulation. Involved in TNF-alpha-induced necroptosis by removing linear ('Met-1'-linked) polyubiquitin chains from RIPK1, thereby regulating the kinase activity of RIPK1. Negatively regulates intestinal inflammation by removing 'Lys-63' linked polyubiquitin chain of NLRP6, thereby reducing the interaction between NLRP6 and PYCARD/ASC and formation of the NLRP6 inflammasome. Does not catalyze deubiquitination of heterotypic 'Lys-63'-/'Lys-48'-linked branched ubiquitin chains. Removes 'Lys-63' linked polyubiquitin chain of MAP3K7, which inhibits phosphorylation and blocks downstream activation of the JNK-p38 kinase cascades. Also removes 'Lys-63'-linked polyubiquitin chains of MAP3K1 and MA3P3K3, which inhibit their interaction with MAP2K1 and MAP2K2. The chain is Ubiquitin carboxyl-terminal hydrolase CYLD (Cyld) from Rattus norvegicus (Rat).